The primary structure comprises 148 residues: Transcription antitermination protein NusB (148 aa).

Belongs to the NusB family.

In terms of biological role, involved in transcription antitermination. Required for transcription of ribosomal RNA (rRNA) genes. Binds specifically to the boxA antiterminator sequence of the ribosomal RNA (rrn) operons. In Desulfitobacterium hafniense (strain DSM 10664 / DCB-2), this protein is Transcription antitermination protein NusB.